Consider the following 477-residue polypeptide: Polyketide synthase-related protein Dhc1 (477 aa).

One can recognise a Carrier domain in the interval 34–112 (EKMTVREGEL…AMTHCVFDRA (79 aa)). Residue S72 is modified to O-(pantetheine 4'-phosphoryl)serine. Residues 161-322 (LTGATSFLGS…AGEVFLENLV (162 aa)) are ketoreductase (KR) domain. Residues 410 to 435 (VQQQQQQQQRQSQPPRDDAADGSPTE) form a disordered region. Over residues 411 to 422 (QQQQQQQQRQSQ) the composition is skewed to low complexity. A compositionally biased stretch (basic and acidic residues) spans 424 to 435 (PRDDAADGSPTE).

It functions in the pathway mycotoxin biosynthesis. Polyketide synthase-related protein; part of the gene cluster that mediates the biosynthesis of 10,11-dehydrocurvularin, a prevalent fungal phytotoxin with heat shock response and immune-modulatory activities. The highly reducing polyketide synthase Dhc3 is responsible for biosynthesis up to the tetraketide stage. The non-reducing polyketide synthase Dhc5 then conducts four additional chain extension cycles, producing the unreduced part of the nascent octaketide from C-1 to C-8 in 10,11-dehydrocurvularin. The role of Dhc1 in 10,11-dehydrocurvularin biosynthesis has not been identified yet. The polypeptide is Polyketide synthase-related protein Dhc1 (Alternaria cinerariae).